The following is a 764-amino-acid chain: 5-methyltetrahydropteroyltriglutamate--homocysteine methyltransferase (764 aa).

Residues 19–22 (RELK) and K113 each bind 5-methyltetrahydropteroyltri-L-glutamate. L-homocysteine contacts are provided by residues 435 to 437 (IGS) and E488. L-methionine contacts are provided by residues 435–437 (IGS) and E488. 5-methyltetrahydropteroyltri-L-glutamate-binding positions include 519-520 (RC) and W565. Residue D603 participates in L-homocysteine binding. D603 contacts L-methionine. E609 contacts 5-methyltetrahydropteroyltri-L-glutamate. 3 residues coordinate Zn(2+): H645, C647, and E669. The Proton donor role is filled by H698. C730 lines the Zn(2+) pocket.

It belongs to the vitamin-B12 independent methionine synthase family. It depends on Zn(2+) as a cofactor.

The catalysed reaction is 5-methyltetrahydropteroyltri-L-glutamate + L-homocysteine = tetrahydropteroyltri-L-glutamate + L-methionine. It participates in amino-acid biosynthesis; L-methionine biosynthesis via de novo pathway; L-methionine from L-homocysteine (MetE route): step 1/1. Functionally, catalyzes the transfer of a methyl group from 5-methyltetrahydrofolate to homocysteine resulting in methionine formation. This Desulforamulus reducens (strain ATCC BAA-1160 / DSM 100696 / MI-1) (Desulfotomaculum reducens) protein is 5-methyltetrahydropteroyltriglutamate--homocysteine methyltransferase.